A 622-amino-acid chain; its full sequence is MAKLSVILLFRSLLLCGALTVSRHATLVTEREVQSSKYDFIVVGGGVSGLTVADRLTEIPDVSVLVIEAGPVDRGEDFVYVPGSYERDPYIWPGLTNEPSAELNNRVFDSVVARVAGGGSIVNAMIFLRGTALDFDGWESLGNHGWGWEGMLPYFIKSENFTRPTPELAHEGNITWDDSVRGHDGPVRYSYPNYIYPGLGRLYEAALHIGIQPRLDPNGGQNTGVFNQPFAIDAATWTRSSARRNHYDPAVSRPNYHFLSDTTVARVIFDGTRAVGVEYLPSRGGGISTAFAAKEVLVAAGALHTPQVLQLSGVGPRDLLEALNIPIISDLPGVGSNLQDQTTFPFVYTWDSAVTPNVTTFLTNTTWATEQRVLYDQHLPSVWTLTRPLAPKFAFLSYEDATANTAYASILDDAQARDPADSLPGDIHPTVLAGYAVQRQIMFNEFRDAGLAVGGMSWDTDANVQVFNVKPFSRGYVYINQTDPLANPVIDFRTASDPTDFQLHIALLHKQRELFNAPSLAALGPTEVVPGPAVQTDEDIIKLMREILQPSNGHQCCSAPMMPRELGGVLSPEMKVYGTTGLRVIDISHWPKELSGPPMASIYAAGEKAADIIKGEHGWLGN.

Residues 1-18 form the signal peptide; it reads MAKLSVILLFRSLLLCGA. FAD contacts are provided by residues 47–48, 68–69, and 123–126; these read VS, EA, and NAMI. Asparagine 160, asparagine 173, asparagine 357, asparagine 364, and asparagine 480 each carry an N-linked (GlcNAc...) asparagine glycan. 598 to 599 is an FAD binding site; sequence PM.

The protein belongs to the GMC oxidoreductase family. In terms of assembly, homodimer. FAD is required as a cofactor.

Its pathway is secondary metabolite biosynthesis. Functionally, dehydrogenase involved in the conversion of monodictyphenone to the prenyl xanthones such as emericellin, shamixanthone and epishamixanthone. Monodictyphenone is first converted to variecoxanthone A via a paeciloxanthone intermediate by the consecutive actions of the FAD-dependent monooxygenase mdpD and the xanthone prenyltransferase xptB. XptB catalyzes regular O-prenylation at the hydroxy group of C-7 of the xanthone ring. Variecoxanthone A is further prenylated to emericellin by xptA before being reduced to shamixanthone and epishamixanthone by the dehydrogenase xptC. The polypeptide is Dehydrogenase xptC (Emericella nidulans (strain FGSC A4 / ATCC 38163 / CBS 112.46 / NRRL 194 / M139) (Aspergillus nidulans)).